A 525-amino-acid polypeptide reads, in one-letter code: GMP synthase [glutamine-hydrolyzing] (525 aa).

A Glutamine amidotransferase type-1 domain is found at 8-206 (PLLILDFGSQ…VVDICKASTD (199 aa)). C85 functions as the Nucleophile in the catalytic mechanism. Active-site residues include H180 and E182. Positions 207-400 (WTPEHIIDEA…LGLPHDMVYR (194 aa)) constitute a GMPS ATP-PPase domain. 234 to 240 (SGGVDSS) is an ATP binding site.

As to quaternary structure, homodimer.

The enzyme catalyses XMP + L-glutamine + ATP + H2O = GMP + L-glutamate + AMP + diphosphate + 2 H(+). The protein operates within purine metabolism; GMP biosynthesis; GMP from XMP (L-Gln route): step 1/1. Its function is as follows. Catalyzes the synthesis of GMP from XMP. The polypeptide is GMP synthase [glutamine-hydrolyzing] (Legionella pneumophila (strain Paris)).